The chain runs to 93 residues: CRISPR-associated endoribonuclease Cas2 3 (93 aa).

Residue Asp-10 coordinates Mg(2+).

This sequence belongs to the CRISPR-associated endoribonuclease Cas2 protein family. In terms of assembly, homodimer, forms a heterotetramer with a Cas1 homodimer. The cofactor is Mg(2+).

Its function is as follows. CRISPR (clustered regularly interspaced short palindromic repeat), is an adaptive immune system that provides protection against mobile genetic elements (viruses, transposable elements and conjugative plasmids). CRISPR clusters contain sequences complementary to antecedent mobile elements and target invading nucleic acids. CRISPR clusters are transcribed and processed into CRISPR RNA (crRNA). Functions as a ssRNA-specific endoribonuclease. Involved in the integration of spacer DNA into the CRISPR cassette. This chain is CRISPR-associated endoribonuclease Cas2 3, found in Chloroflexus aurantiacus (strain ATCC 29366 / DSM 635 / J-10-fl).